Here is a 971-residue protein sequence, read N- to C-terminus: Kinesin-like protein KIN-6 (971 aa).

Disordered regions lie at residues 1–44 (MEEK…SSLA) and 93–121 (TTTTKSRPRNVWPQNPSKKNNAKENRNPE). Positions 29–39 (ATPFTTTTKPP) are enriched in low complexity. The region spanning 76-460 (SLKIFLRIKP…LRQASPYMKI (385 aa)) is the Kinesin motor domain. 202 to 209 (GPSGSGKT) is an ATP binding site. The span at 700-709 (RREAGSEESS) shows a compositional bias: basic and acidic residues. 2 disordered regions span residues 700 to 856 (RREA…TEEM) and 872 to 917 (KTTN…RLQP). Positions 768 to 783 (QSVNSEENVGIPSTIT) are enriched in polar residues. Positions 785–797 (VEAEVTDFQRDQN) are enriched in basic and acidic residues. Over residues 809–827 (EVSQDCINSGLSNVQTKSA) the composition is skewed to polar residues. Positions 831 to 842 (RFPDSEKQERNR) are enriched in basic and acidic residues. Positions 903–915 (KKQKNGQKPKRRL) are enriched in basic residues.

It belongs to the TRAFAC class myosin-kinesin ATPase superfamily. Kinesin family. KIN-6 subfamily.

This is Kinesin-like protein KIN-6 from Arabidopsis thaliana (Mouse-ear cress).